We begin with the raw amino-acid sequence, 258 residues long: Gamma-secretase subunit Aph-1b (258 aa).

7 helical membrane passes run 3–23 (VAVF…LFMF), 32–52 (VIFL…SSLV), 70–90 (GLLI…RYGY), 118–138 (AYVS…VNIL), 161–181 (AFMT…FFEA), 187–207 (WWAL…TFVN), and 214–234 (LIPT…CAGG).

It belongs to the APH-1 family. In terms of assembly, component of the gamma-secretase complex, a complex composed of a presenilin homodimer (PSEN1 or PSEN2), nicastrin (NCSTN), APH1 and PEN2.

The protein localises to the membrane. Essential subunit of the gamma-secretase complex, an endoprotease complex that catalyzes the intramembrane cleavage of integral proteins such as Notch receptors. It may represent a stabilizing cofactor for the presenilin homodimer that promotes the formation of a stable complex. The chain is Gamma-secretase subunit Aph-1b (aph1b) from Danio rerio (Zebrafish).